A 479-amino-acid chain; its full sequence is Cysteine--tRNA ligase (479 aa).

Residue Cys28 participates in Zn(2+) binding. Positions 30 to 40 match the 'HIGH' region motif; it reads PTVYDHAHLGH. The Zn(2+) site is built by Cys207, His232, and Glu236. The 'KMSKS' region motif lies at 264–268; it reads KMSKS. Lys267 is an ATP binding site.

The protein belongs to the class-I aminoacyl-tRNA synthetase family. Requires Zn(2+) as cofactor.

The protein localises to the cytoplasm. It carries out the reaction tRNA(Cys) + L-cysteine + ATP = L-cysteinyl-tRNA(Cys) + AMP + diphosphate. The chain is Cysteine--tRNA ligase from Methanococcus aeolicus (strain ATCC BAA-1280 / DSM 17508 / OCM 812 / Nankai-3).